A 498-amino-acid chain; its full sequence is Hexokinase-1 (498 aa).

The Hexokinase domain maps to 39–492 (AAAQRVVAEL…SGLGAALVAA (454 aa)). Residues 95-233 (TGGEEGSYYA…GLDMRVSALI (139 aa)) are hexokinase small subdomain. ADP is bound by residues glycine 109, threonine 110, and asparagine 111. Threonine 199, lysine 200, asparagine 234, and aspartate 235 together coordinate D-glucose. Residues 234-481 (NDTVGTLAAG…ERVVVKLASD (248 aa)) are hexokinase large subdomain. Position 258 (threonine 258) interacts with ADP. D-glucose is bound by residues asparagine 261, glutamate 290, and glutamate 321. Glycine 446 contributes to the ADP binding site.

This sequence belongs to the hexokinase family. Highly expressed in senescent leaves.

It carries out the reaction a D-hexose + ATP = a D-hexose 6-phosphate + ADP + H(+). It catalyses the reaction D-fructose + ATP = D-fructose 6-phosphate + ADP + H(+). The catalysed reaction is D-glucose + ATP = D-glucose 6-phosphate + ADP + H(+). It participates in carbohydrate metabolism; hexose metabolism. Its pathway is carbohydrate degradation; glycolysis; D-glyceraldehyde 3-phosphate and glycerone phosphate from D-glucose: step 1/4. Functionally, fructose and glucose phosphorylating enzyme. Acts as a positive regulator of leaf senescence by mediating glucose accumulation and inducing an increase in reactive oxygen species (ROS). The sequence is that of Hexokinase-1 (HXK1) from Oryza sativa subsp. japonica (Rice).